We begin with the raw amino-acid sequence, 512 residues long: Cytochrome P450 1A1 (512 aa).

A mitochondrial targeting signal region spans residues 29 to 40 (SRPRVPKGLKNP). Ser67 carries an O-linked (GlcNAc) serine glycan. Phe224 is a substrate binding site. Position 457 (Cys457) interacts with heme.

The protein belongs to the cytochrome P450 family. In terms of assembly, interacts with cytosolic chaperones HSP70 and HSP90; this interaction is required for initial targeting to mitochondria. Interacts (via mitochondrial targeting signal) with TOMM40 (via N-terminus); this interaction is required for translocation across the mitochondrial outer membrane. The cofactor is heme.

Its subcellular location is the endoplasmic reticulum membrane. The protein resides in the mitochondrion inner membrane. The protein localises to the microsome membrane. It localises to the cytoplasm. It carries out the reaction an organic molecule + reduced [NADPH--hemoprotein reductase] + O2 = an alcohol + oxidized [NADPH--hemoprotein reductase] + H2O + H(+). It catalyses the reaction estrone + reduced [NADPH--hemoprotein reductase] + O2 = 2-hydroxyestrone + oxidized [NADPH--hemoprotein reductase] + H2O + H(+). The catalysed reaction is estrone + reduced [NADPH--hemoprotein reductase] + O2 = 4-hydroxyestrone + oxidized [NADPH--hemoprotein reductase] + H2O + H(+). The enzyme catalyses estrone + reduced [NADPH--hemoprotein reductase] + O2 = 6alpha-hydroxyestrone + oxidized [NADPH--hemoprotein reductase] + H2O + H(+). It carries out the reaction estrone + reduced [NADPH--hemoprotein reductase] + O2 = 15alpha-hydroxyestrone + oxidized [NADPH--hemoprotein reductase] + H2O + H(+). It catalyses the reaction estrone + reduced [NADPH--hemoprotein reductase] + O2 = 16alpha-hydroxyestrone + oxidized [NADPH--hemoprotein reductase] + H2O + H(+). The catalysed reaction is 17beta-estradiol + reduced [NADPH--hemoprotein reductase] + O2 = 2-hydroxy-17beta-estradiol + oxidized [NADPH--hemoprotein reductase] + H2O + H(+). The enzyme catalyses 17beta-estradiol + reduced [NADPH--hemoprotein reductase] + O2 = 4-hydroxy-17beta-estradiol + oxidized [NADPH--hemoprotein reductase] + H2O + H(+). It carries out the reaction 17beta-estradiol + reduced [NADPH--hemoprotein reductase] + O2 = 6alpha-hydroxy-17beta-estradiol + oxidized [NADPH--hemoprotein reductase] + H2O + H(+). It catalyses the reaction 17beta-estradiol + reduced [NADPH--hemoprotein reductase] + O2 = 7alpha-hydroxy-17beta-estradiol + oxidized [NADPH--hemoprotein reductase] + H2O + H(+). The catalysed reaction is 17beta-estradiol + reduced [NADPH--hemoprotein reductase] + O2 = 15alpha-hydroxy-17beta-estradiol + oxidized [NADPH--hemoprotein reductase] + H2O + H(+). The enzyme catalyses (5Z,8Z,11Z)-eicosatrienoate + reduced [NADPH--hemoprotein reductase] + O2 = 19-hydroxy-(5Z,8Z,11Z)-eicosatrienoate + oxidized [NADPH--hemoprotein reductase] + H2O + H(+). It carries out the reaction (5Z,8Z,11Z,14Z)-eicosatetraenoate + reduced [NADPH--hemoprotein reductase] + O2 = 16-hydroxy-(5Z,8Z,11Z,14Z)-eicosatetraenoate + oxidized [NADPH--hemoprotein reductase] + H2O + H(+). It catalyses the reaction (5Z,8Z,11Z,14Z)-eicosatetraenoate + reduced [NADPH--hemoprotein reductase] + O2 = 17-hydroxy-(5Z,8Z,11Z,14Z)-eicosatetraenoate + oxidized [NADPH--hemoprotein reductase] + H2O + H(+). The catalysed reaction is (5Z,8Z,11Z,14Z)-eicosatetraenoate + reduced [NADPH--hemoprotein reductase] + O2 = 18-hydroxy-(5Z,8Z,11Z,14Z)-eicosatetraenoate + oxidized [NADPH--hemoprotein reductase] + H2O + H(+). The enzyme catalyses (5Z,8Z,11Z,14Z)-eicosatetraenoate + reduced [NADPH--hemoprotein reductase] + O2 = 19-hydroxy-(5Z,8Z,11Z,14Z)-eicosatetraenoate + oxidized [NADPH--hemoprotein reductase] + H2O + H(+). It carries out the reaction (5Z,8Z,11Z,14Z,17Z)-eicosapentaenoate + reduced [NADPH--hemoprotein reductase] + O2 = 19-hydroxy-(5Z,8Z,11Z,14Z,17Z)-eicosapentaenoate + oxidized [NADPH--hemoprotein reductase] + H2O + H(+). It catalyses the reaction (5Z,8Z,11Z,14Z)-eicosatetraenoate + reduced [NADPH--hemoprotein reductase] + O2 = (8R,9S)-epoxy-(5Z,11Z,14Z)-eicosatrienoate + oxidized [NADPH--hemoprotein reductase] + H2O + H(+). The catalysed reaction is (5Z,8Z,11Z,14Z)-eicosatetraenoate + reduced [NADPH--hemoprotein reductase] + O2 = (11R,12S)-epoxy-(5Z,8Z,14Z)-eicosatrienoate + oxidized [NADPH--hemoprotein reductase] + H2O + H(+). The enzyme catalyses (5Z,8Z,11Z,14Z)-eicosatetraenoate + reduced [NADPH--hemoprotein reductase] + O2 = (14S,15R)-epoxy-(5Z,8Z,11Z)-eicosatrienoate + oxidized [NADPH--hemoprotein reductase] + H2O + H(+). It carries out the reaction (5Z,8Z,11Z,14Z)-eicosatetraenoate + reduced [NADPH--hemoprotein reductase] + O2 = (14R,15S)-epoxy-(5Z,8Z,11Z)-eicosatrienoate + oxidized [NADPH--hemoprotein reductase] + H2O + H(+). It catalyses the reaction (5Z,8Z,11Z,14Z,17Z)-eicosapentaenoate + reduced [NADPH--hemoprotein reductase] + O2 = (17R,18S)-epoxy-(5Z,8Z,11Z,14Z)-eicosatetraenoate + oxidized [NADPH--hemoprotein reductase] + H2O + H(+). The catalysed reaction is (4Z,7Z,10Z,13Z,16Z,19Z)-docosahexaenoate + reduced [NADPH--hemoprotein reductase] + O2 = (19S,20R)-epoxy-(4Z,7Z,10Z,13Z,16Z)-docosapentaenoate + oxidized [NADPH--hemoprotein reductase] + H2O + H(+). The enzyme catalyses (4Z,7Z,10Z,13Z,16Z,19Z)-docosahexaenoate + reduced [NADPH--hemoprotein reductase] + O2 = (19R,20S)-epoxy-(4Z,7Z,10Z,13Z,16Z)-docosapentaenoate + oxidized [NADPH--hemoprotein reductase] + H2O + H(+). It carries out the reaction all-trans-retinol + reduced [NADPH--hemoprotein reductase] + O2 = all-trans-retinal + oxidized [NADPH--hemoprotein reductase] + 2 H2O + H(+). It catalyses the reaction all-trans-retinal + reduced [NADPH--hemoprotein reductase] + O2 = all-trans-retinoate + oxidized [NADPH--hemoprotein reductase] + H2O + 2 H(+). The catalysed reaction is (13S)-hydroperoxy-(9Z,11E)-octadecadienoate = 13-oxo-(9Z,11E)-octadecadienoate + H2O. The enzyme catalyses (12S)-hydroperoxy-(5Z,8Z,10E,14Z)-eicosatetraenoate = 12-oxo-(5Z,8Z,10E,14Z)-eicosatetraenoate + H2O. It carries out the reaction (15S)-hydroperoxy-(5Z,8Z,11Z,13E)-eicosatetraenoate = 15-oxo-(5Z,8Z,11Z,13E)-eicosatetraenoate + H2O. It catalyses the reaction (5S)-hydroperoxy-(6E,8Z,11Z,14Z)-eicosatetraenoate = 5-oxo-(6E,8Z,11Z,14Z)-eicosatetraenoate + H2O. The protein operates within steroid hormone biosynthesis. It participates in lipid metabolism; fatty acid metabolism. Its pathway is cofactor metabolism; retinol metabolism. Functionally, a cytochrome P450 monooxygenase involved in the metabolism of various endogenous substrates, including fatty acids, steroid hormones and vitamins. Mechanistically, uses molecular oxygen inserting one oxygen atom into a substrate, and reducing the second into a water molecule, with two electrons provided by NADPH via cytochrome P450 reductase (CPR; NADPH-ferrihemoprotein reductase). Catalyzes the hydroxylation of carbon-hydrogen bonds. Exhibits high catalytic activity for the formation of hydroxyestrogens from estrone (E1) and 17beta-estradiol (E2), namely 2-hydroxy E1 and E2, as well as D-ring hydroxylated E1 and E2 at the C15alpha and C16alpha positions. Displays different regioselectivities for polyunsaturated fatty acids (PUFA) hydroxylation. Catalyzes the epoxidation of double bonds of certain PUFA. Converts arachidonic acid toward epoxyeicosatrienoic acid (EET) regioisomers, 8,9-, 11,12-, and 14,15-EET, that function as lipid mediators in the vascular system. Displays an absolute stereoselectivity in the epoxidation of eicosapentaenoic acid (EPA) producing the 17(R),18(S) enantiomer. May play an important role in all-trans retinoic acid biosynthesis in extrahepatic tissues. Catalyzes two successive oxidative transformation of all-trans retinol to all-trans retinal and then to the active form all-trans retinoic acid. May also participate in eicosanoids metabolism by converting hydroperoxide species into oxo metabolites (lipoxygenase-like reaction, NADPH-independent). This Macaca fascicularis (Crab-eating macaque) protein is Cytochrome P450 1A1 (CYP1A1).